Here is a 240-residue protein sequence, read N- to C-terminus: Bidirectional sugar transporter SWEET7c (240 aa).

Over 1 to 12 (MVSPDLIRNVVG) the chain is Extracellular. The MtN3/slv 1 domain occupies 10-48 (VVGIVGNVISFGLFLSPVPIFWWIIKNKNVQNFKADPIL). Residues 13–33 (IVGNVISFGLFLSPVPIFWWI) form a helical membrane-spanning segment. The Cytoplasmic segment spans residues 34–46 (IKNKNVQNFKADP). The helical transmembrane segment at 47–67 (ILVVTINGISLVIEAVYLTIF) threads the bilayer. At 68–78 (FLFSDKKNKKK) the chain is on the extracellular side. A helical transmembrane segment spans residues 79–99 (MGVVLATEALFMAAVAVGVLL). Topologically, residues 100–108 (GAHTHQRRS) are cytoplasmic. Residues 109–129 (LIVGILCVIFGTIMYSSPLTI) traverse the membrane as a helical segment. A MtN3/slv 2 domain is found at 110-191 (IVGILCVIFG…LILYAIYYRT (82 aa)). Residues 130–140 (MVVKTKSVEYM) lie on the Extracellular side of the membrane. A helical transmembrane segment spans residues 141 to 161 (PLLLSVVSFLNGLCWTLYALI). The Cytoplasmic segment spans residues 162 to 164 (RFD). Residues 165–185 (IFITIPNGLGVLFAIMQLILY) form a helical membrane-spanning segment. Topologically, residues 186–240 (AIYYRTTPKKQDKNLELPTVAPIAKDTSIVAPVGNDDDVNGSTASHATINITIEP) are extracellular. N-linked (GlcNAc...) asparagine glycans are attached at residues N225 and N235.

This sequence belongs to the SWEET sugar transporter family. As to quaternary structure, forms homooligomers and/or heterooligomers.

The protein localises to the cell membrane. In terms of biological role, mediates both low-affinity uptake and efflux of sugar across the plasma membrane. The polypeptide is Bidirectional sugar transporter SWEET7c (SWEET7C) (Oryza sativa subsp. indica (Rice)).